The chain runs to 511 residues: MTIILKPGSVPLETLKKIYREGLPVRIDPAFHAGIEKAAARIAEIAAGDAPVYGINTGFGKLASIRIAAGDVATLQRNLILPHCCGVGEPLSENIVRLIMALKLVSLGRGASGVRLEVITLIEAMLEKGVIPMIPEKGSVGASGDLAPLAHMTAAMIGEGEAFYRGERLSGAKALGKAGLKPVVLAAKEGLALINGTQTSTALALAGLFRAHRAARTALITGALSTDAAMGSDAPFHEEIHQLRGHKGQIDAGRALRTLLEGSAIRRSHLEGDQRVQDPYCIRCQPQVDGACLDILRQAARTLEIEANAVTDNPLVLSDGRAVSGGNFHAEPVAFAADQIALAVCEIGAISQRRIALLVDPSLSFGLPAFLARKPGLNSGLMIAEVTSAALMSENKQMAHPASVDSTPTSANQEDHVSMACNGARRLLQMTANLNAIIGIEALTGALGVELRKPLTTSAELAKVIAALRAKVATLEEDRYMADDLKAAAELVADGTLSGVISAGILPDLEA.

Residues 142–144 constitute a cross-link (5-imidazolinone (Ala-Gly)); the sequence is ASG. S143 carries the 2,3-didehydroalanine (Ser) modification.

The protein belongs to the PAL/histidase family. Post-translationally, contains an active site 4-methylidene-imidazol-5-one (MIO), which is formed autocatalytically by cyclization and dehydration of residues Ala-Ser-Gly.

It is found in the cytoplasm. The enzyme catalyses L-histidine = trans-urocanate + NH4(+). The protein operates within amino-acid degradation; L-histidine degradation into L-glutamate; N-formimidoyl-L-glutamate from L-histidine: step 1/3. This is Histidine ammonia-lyase from Brucella ovis (strain ATCC 25840 / 63/290 / NCTC 10512).